Here is a 238-residue protein sequence, read N- to C-terminus: tRNA (guanine-N(7)-)-methyltransferase (238 aa).

Positions 1-12 are enriched in polar residues; sequence MTDTAENQTPND. Residues 1–20 form a disordered region; it reads MTDTAENQTPNDRQAGHPRS. E70, D95, D122, and D145 together coordinate S-adenosyl-L-methionine. D145 is an active-site residue. Residues K149, D181, and 216–219 each bind substrate; that span reads TKFE.

This sequence belongs to the class I-like SAM-binding methyltransferase superfamily. TrmB family.

The enzyme catalyses guanosine(46) in tRNA + S-adenosyl-L-methionine = N(7)-methylguanosine(46) in tRNA + S-adenosyl-L-homocysteine. The protein operates within tRNA modification; N(7)-methylguanine-tRNA biosynthesis. Catalyzes the formation of N(7)-methylguanine at position 46 (m7G46) in tRNA. The sequence is that of tRNA (guanine-N(7)-)-methyltransferase from Neisseria gonorrhoeae (strain NCCP11945).